Here is a 413-residue protein sequence, read N- to C-terminus: 3-isopropylmalate dehydratase large subunit (413 aa).

Positions 295, 353, and 356 each coordinate [4Fe-4S] cluster.

This sequence belongs to the aconitase/IPM isomerase family. LeuC type 2 subfamily. Heterodimer of LeuC and LeuD. The cofactor is [4Fe-4S] cluster.

The catalysed reaction is (2R,3S)-3-isopropylmalate = (2S)-2-isopropylmalate. Its pathway is amino-acid biosynthesis; L-leucine biosynthesis; L-leucine from 3-methyl-2-oxobutanoate: step 2/4. In terms of biological role, catalyzes the isomerization between 2-isopropylmalate and 3-isopropylmalate, via the formation of 2-isopropylmaleate. This chain is 3-isopropylmalate dehydratase large subunit, found in Pyrobaculum calidifontis (strain DSM 21063 / JCM 11548 / VA1).